Reading from the N-terminus, the 209-residue chain is Small ribosomal subunit protein uS4 (209 aa).

In terms of domain architecture, S4 RNA-binding spans 99-162 (RRLDNMVYRL…RKNNKIIEAM (64 aa)).

It belongs to the universal ribosomal protein uS4 family. As to quaternary structure, part of the 30S ribosomal subunit. Contacts protein S5. The interaction surface between S4 and S5 is involved in control of translational fidelity.

Its function is as follows. One of the primary rRNA binding proteins, it binds directly to 16S rRNA where it nucleates assembly of the body of the 30S subunit. Functionally, with S5 and S12 plays an important role in translational accuracy. The protein is Small ribosomal subunit protein uS4 of Syntrophus aciditrophicus (strain SB).